The primary structure comprises 464 residues: tRNA modification GTPase MnmE (464 aa).

(6S)-5-formyl-5,6,7,8-tetrahydrofolate is bound by residues arginine 25, glutamate 87, and lysine 130. The TrmE-type G domain maps to 226-386 (GLSVVLAGQP…LRAELLRIAG (161 aa)). Residue asparagine 236 participates in K(+) binding. GTP-binding positions include 236–241 (NVGKSS), 255–261 (TPIAGTT), and 280–283 (DTAG). Serine 240 is a binding site for Mg(2+). Positions 255, 257, and 260 each coordinate K(+). Position 261 (threonine 261) interacts with Mg(2+). Lysine 464 contacts (6S)-5-formyl-5,6,7,8-tetrahydrofolate.

The protein belongs to the TRAFAC class TrmE-Era-EngA-EngB-Septin-like GTPase superfamily. TrmE GTPase family. As to quaternary structure, homodimer. Heterotetramer of two MnmE and two MnmG subunits. Requires K(+) as cofactor.

Its subcellular location is the cytoplasm. In terms of biological role, exhibits a very high intrinsic GTPase hydrolysis rate. Involved in the addition of a carboxymethylaminomethyl (cmnm) group at the wobble position (U34) of certain tRNAs, forming tRNA-cmnm(5)s(2)U34. This Burkholderia lata (strain ATCC 17760 / DSM 23089 / LMG 22485 / NCIMB 9086 / R18194 / 383) protein is tRNA modification GTPase MnmE.